The sequence spans 239 residues: Ribonuclease PH (239 aa).

Residues Arg86 and 124–126 (GTR) contribute to the phosphate site.

The protein belongs to the RNase PH family. As to quaternary structure, homohexameric ring arranged as a trimer of dimers.

It carries out the reaction tRNA(n+1) + phosphate = tRNA(n) + a ribonucleoside 5'-diphosphate. Functionally, phosphorolytic 3'-5' exoribonuclease that plays an important role in tRNA 3'-end maturation. Removes nucleotide residues following the 3'-CCA terminus of tRNAs; can also add nucleotides to the ends of RNA molecules by using nucleoside diphosphates as substrates, but this may not be physiologically important. Probably plays a role in initiation of 16S rRNA degradation (leading to ribosome degradation) during starvation. In Rickettsia bellii (strain RML369-C), this protein is Ribonuclease PH.